Consider the following 365-residue polypeptide: DNA replication and repair protein RecF (365 aa).

30-37 (GDNAQGKT) serves as a coordination point for ATP.

Belongs to the RecF family.

The protein resides in the cytoplasm. Its function is as follows. The RecF protein is involved in DNA metabolism; it is required for DNA replication and normal SOS inducibility. RecF binds preferentially to single-stranded, linear DNA. It also seems to bind ATP. This chain is DNA replication and repair protein RecF, found in Alkaliphilus oremlandii (strain OhILAs) (Clostridium oremlandii (strain OhILAs)).